We begin with the raw amino-acid sequence, 432 residues long: Adenosylhomocysteinase (432 aa).

Residues 1–24 (MSAYSPLSAQLDADTDVDVESTRT) form a disordered region. Positions 137 and 162 each coordinate substrate. 163-165 (TTT) is an NAD(+) binding site. Positions 192 and 196 each coordinate substrate. NAD(+)-binding positions include N197, 226 to 231 (GYGYCG), E249, N284, 305 to 307 (AGH), and N352.

This sequence belongs to the adenosylhomocysteinase family. The cofactor is NAD(+).

The protein resides in the cytoplasm. The catalysed reaction is S-adenosyl-L-homocysteine + H2O = L-homocysteine + adenosine. It functions in the pathway amino-acid biosynthesis; L-homocysteine biosynthesis; L-homocysteine from S-adenosyl-L-homocysteine: step 1/1. Its function is as follows. May play a key role in the regulation of the intracellular concentration of adenosylhomocysteine. In Haloquadratum walsbyi (strain DSM 16854 / JCM 12705 / C23), this protein is Adenosylhomocysteinase.